The primary structure comprises 186 residues: UPF0301 protein Sfri_2850 (186 aa).

Belongs to the UPF0301 (AlgH) family.

The chain is UPF0301 protein Sfri_2850 from Shewanella frigidimarina (strain NCIMB 400).